The primary structure comprises 702 residues: Elongation factor G (702 aa).

The tr-type G domain maps to 8-290 (ERYRNIGISA…AVIEYLPAPT (283 aa)). GTP is bound by residues 17–24 (AHIDAGKT), 88–92 (DTPGH), and 142–145 (NKMD).

This sequence belongs to the TRAFAC class translation factor GTPase superfamily. Classic translation factor GTPase family. EF-G/EF-2 subfamily.

It is found in the cytoplasm. Its function is as follows. Catalyzes the GTP-dependent ribosomal translocation step during translation elongation. During this step, the ribosome changes from the pre-translocational (PRE) to the post-translocational (POST) state as the newly formed A-site-bound peptidyl-tRNA and P-site-bound deacylated tRNA move to the P and E sites, respectively. Catalyzes the coordinated movement of the two tRNA molecules, the mRNA and conformational changes in the ribosome. The chain is Elongation factor G from Yersinia pseudotuberculosis serotype O:1b (strain IP 31758).